The primary structure comprises 330 residues: Ferredoxin--NADP reductase (330 aa).

FAD contacts are provided by Glu-35, Gln-43, Tyr-48, Val-90, Phe-123, Asp-285, and Thr-326.

It belongs to the ferredoxin--NADP reductase type 2 family. Homodimer. Requires FAD as cofactor.

It carries out the reaction 2 reduced [2Fe-2S]-[ferredoxin] + NADP(+) + H(+) = 2 oxidized [2Fe-2S]-[ferredoxin] + NADPH. This is Ferredoxin--NADP reductase from Streptococcus pyogenes serotype M28 (strain MGAS6180).